Here is a 239-residue protein sequence, read N- to C-terminus: Lipoprotein-releasing system ATP-binding protein LolD (239 aa).

The 231-residue stretch at 9-239 (LQVQHVSKHY…AATSPTGLAE (231 aa)) folds into the ABC transporter domain. An ATP-binding site is contributed by 45-52 (GSSGSGKS).

The protein belongs to the ABC transporter superfamily. Lipoprotein translocase (TC 3.A.1.125) family. As to quaternary structure, the complex is composed of two ATP-binding proteins (LolD) and two transmembrane proteins (LolC and LolE).

The protein resides in the cell inner membrane. Part of the ABC transporter complex LolCDE involved in the translocation of mature outer membrane-directed lipoproteins, from the inner membrane to the periplasmic chaperone, LolA. Responsible for the formation of the LolA-lipoprotein complex in an ATP-dependent manner. The chain is Lipoprotein-releasing system ATP-binding protein LolD from Shewanella frigidimarina (strain NCIMB 400).